Consider the following 314-residue polypeptide: TPR repeat-containing protein MJ1345 (314 aa).

9 TPR repeats span residues 12–45 (ESIL…RESP), 46–78 (DVYV…KPKY), 80–112 (LANF…EKSD), 114–146 (PVKY…YPKS), 147–180 (AIAW…NPKD), 182–214 (QSLL…NNKD), 215–248 (IRAL…NPDD), 249–282 (PLLY…NPNI), and 284–313 (DAWN…LDIY).

The chain is TPR repeat-containing protein MJ1345 from Methanocaldococcus jannaschii (strain ATCC 43067 / DSM 2661 / JAL-1 / JCM 10045 / NBRC 100440) (Methanococcus jannaschii).